We begin with the raw amino-acid sequence, 507 residues long: Cytochrome P450 4A14 (507 aa).

The propeptide at 1 to 4 (MGFS) is removed in mature form. E318 contributes to the heme binding site. Phosphoserine is present on S437. C454 lines the heme pocket.

This sequence belongs to the cytochrome P450 family. Heme serves as cofactor.

The protein localises to the endoplasmic reticulum membrane. It is found in the microsome membrane. The catalysed reaction is an omega-methyl-long-chain fatty acid + reduced [NADPH--hemoprotein reductase] + O2 = an omega-hydroxy-long-chain fatty acid + oxidized [NADPH--hemoprotein reductase] + H2O + H(+). The enzyme catalyses dodecanoate + reduced [NADPH--hemoprotein reductase] + O2 = (11R)-hydroxydodecanoate + oxidized [NADPH--hemoprotein reductase] + H2O + H(+). It catalyses the reaction dodecanoate + reduced [NADPH--hemoprotein reductase] + O2 = 12-hydroxydodecanoate + oxidized [NADPH--hemoprotein reductase] + H2O + H(+). It carries out the reaction tetradecanoate + reduced [NADPH--hemoprotein reductase] + O2 = 14-hydroxytetradecanoate + oxidized [NADPH--hemoprotein reductase] + H2O + H(+). It participates in lipid metabolism; fatty acid metabolism. Its function is as follows. A cytochrome P450 monooxygenase that catalyzes omega and omega-1 hydroxylation of saturated fatty acids. Exhibits preferential omega versus omega-1 regioselectivity and (R) versus (S) stereoselectivity for hydroxylation of dodecanoic (lauric) acid. Mechanistically, uses molecular oxygen inserting one oxygen atom into a substrate, and reducing the second into a water molecule, with two electrons provided by NADPH via cytochrome P450 reductase (CPR; NADPH-ferrihemoprotein reductase). The sequence is that of Cytochrome P450 4A14 from Rattus norvegicus (Rat).